The following is a 388-amino-acid chain: Pepsin A (388 aa).

Residues 1–15 (MKWLLLLGLVALSEC) form the signal peptide. Residues 16–62 (IIYKVPLVRKKSLRRNLSEHGLLKDFLKKHNRNPASKYFPQTEAPTL) constitute a propeptide, activation peptide. Positions 76 to 385 (YFGTIGIGTP…DRANNQVGLA (310 aa)) constitute a Peptidase A1 domain. Aspartate 94 is a catalytic residue. A disulfide bond links cysteine 107 and cysteine 112. Serine 130 is subject to Phosphoserine. Cysteine 268 and cysteine 272 are disulfide-bonded. Residue aspartate 277 is part of the active site. Cysteine 311 and cysteine 344 form a disulfide bridge.

Belongs to the peptidase A1 family.

Its subcellular location is the secreted. It catalyses the reaction Preferential cleavage: hydrophobic, preferably aromatic, residues in P1 and P1' positions. Cleaves 1-Phe-|-Val-2, 4-Gln-|-His-5, 13-Glu-|-Ala-14, 14-Ala-|-Leu-15, 15-Leu-|-Tyr-16, 16-Tyr-|-Leu-17, 23-Gly-|-Phe-24, 24-Phe-|-Phe-25 and 25-Phe-|-Tyr-26 bonds in the B chain of insulin.. Its function is as follows. Shows particularly broad specificity; although bonds involving phenylalanine and leucine are preferred, many others are also cleaved to some extent. The polypeptide is Pepsin A (PGA) (Macaca mulatta (Rhesus macaque)).